The chain runs to 341 residues: Methionine import ATP-binding protein MetN (341 aa).

The region spanning 2–241 (IELNQVVKRY…PQHEVTRRFV (240 aa)) is the ABC transporter domain. Residue 38–45 (GFSGAGKS) coordinates ATP.

This sequence belongs to the ABC transporter superfamily. Methionine importer (TC 3.A.1.24) family. As to quaternary structure, the complex is composed of two ATP-binding proteins (MetN), two transmembrane proteins (MetI) and a solute-binding protein (MetQ).

It localises to the cell membrane. It carries out the reaction L-methionine(out) + ATP + H2O = L-methionine(in) + ADP + phosphate + H(+). It catalyses the reaction D-methionine(out) + ATP + H2O = D-methionine(in) + ADP + phosphate + H(+). In terms of biological role, part of the ABC transporter complex MetNIQ involved in methionine import. Responsible for energy coupling to the transport system. In Staphylococcus haemolyticus (strain JCSC1435), this protein is Methionine import ATP-binding protein MetN.